Consider the following 188-residue polypeptide: MLYIEVLLLAIGLSMDSLAVSVTGGAVLKNNCTAGNIIKIASVLGIFQAGMTVIGYTMGLGFEKYICAFDHWIAFTLLLYLGGKMIYDSTKEEEEDGKFDPLCNRTLCGLGIATSIDALAVGISLAILKSPLLLQASTIGVVTFAISAFGVYFGNRFGKRIDLKLDLIGGLILIGIGTKILIEHLFFS.

Helical transmembrane passes span 2-22 (LYIE…AVSV), 40-60 (IASV…TMGL), 66-86 (ICAF…GKMI), 107-127 (LCGL…SLAI), 133-153 (LLQA…GVYF), and 167-187 (LIGG…HLFF).

The protein belongs to the MntP (TC 9.B.29) family.

It is found in the cell inner membrane. Its function is as follows. Probably functions as a manganese efflux pump. The polypeptide is Putative manganese efflux pump MntP (Parabacteroides distasonis (strain ATCC 8503 / DSM 20701 / CIP 104284 / JCM 5825 / NCTC 11152)).